We begin with the raw amino-acid sequence, 2032 residues long: Cytoskeleton-associated protein 5 (2032 aa).

TOG stretches follow at residues 1 to 223 (MGDD…KLPT) and 268 to 502 (YELL…LIHG). An N6-acetyllysine modification is found at Lys48. HEAT repeat units lie at residues 159-197 (IILLKPIIKVLPKLFESREKAVRDEAKLIAVEIYRWIRD), 356-394 (GQYAGHVVPTILEKFKEKKPQVVQALQEAIDAIFLTTTL), and 434-472 (KSLLKPFCAALLKHINDSAPEVRDAAFEALGTALKVVGE). A disordered region spans residues 516 to 579 (PLPGRTAASG…GTKNKKGLET (64 aa)). Over residues 543–554 (LKKAPAAKAGGP) the composition is skewed to low complexity. Positions 588–817 (SIEVCEEKAS…EFEKMQGQSP (230 aa)) are TOG 3. One copy of the HEAT 4 repeat lies at 750–788 (GLNVKAFISNVKTALAATNPAVRTAAITLLGVMYLYVGP). Positions 811-851 (KMQGQSPPAPTRGISKHSTSGTDEGEDGDEPDDGSNDVVDL) are disordered. Ser816 and Ser845 each carry phosphoserine. Residues 833–845 (DEGEDGDEPDDGS) are compositionally biased toward acidic residues. TOG regions lie at residues 853–1081 (PRTE…VNMP) and 1193–1428 (IEQL…KRPS). HEAT repeat units lie at residues 855–893 (TEISDKITSELVSKIGDKNWKIRKEGLDEVAGIINDAKF), 936–974 (KQHVKNLGIPIITVLGDSKNNVRAAALATVNAWAEQTGM), and 1013–1051 (PTDLILCVPHLYSCLEDRNGDVRKKAQDALPFFMMHLGY). The interval 1077-1160 (KVNMPAKPAP…KEDEDKSGPI (84 aa)) is disordered. HEAT repeat units follow at residues 1284–1322 (ENEASSFIPYLVVKVGEPKDVIRKDVRAILNRMCLVYPA), 1324–1357 (KMFPFIMEGTKSKNSKQRAECLEELGCLVESYGM), and 1361–1399 (QPTPGKALKEIAVHIGDRDNAVRNAALNTIVTVYNVHGD). Positions 1422–1443 (RSAKRPSAAPIKQVEEKPQRAQ) are disordered. Residue Ser1469 is modified to Phosphoserine. Residues 1801 to 1822 (SMDQTGSKSDKETEKGASRIDE) are disordered. A compositionally biased stretch (basic and acidic residues) spans 1808 to 1822 (KSDKETEKGASRIDE). Ser1861 is subject to Phosphoserine. Residues 1932–1957 (PSVYLERLKILRQRCGLDNTKQDDRP) are interaction with TACC3. The tract at residues 1949–2032 (DNTKQDDRPP…RLERIKSSRK (84 aa)) is disordered. Positions 1971 to 1983 (VASSTDMLHSKLS) are enriched in polar residues. Positions 1984–1997 (QLRESREQHQHSDL) are enriched in basic and acidic residues. Low complexity predominate over residues 2002–2014 (THSSGTVTSSSST). Basic and acidic residues predominate over residues 2018 to 2032 (DDLKKRLERIKSSRK).

Belongs to the TOG/XMAP215 family. As to quaternary structure, interacts with TACC1. Interacts with SLAIN2 and SLAIN1. Interacts with HNRNPA2B1. Interacts with TACC3 independently of clathrin. Interacts with TACC3 and clathrin forming the TACC3/ch-TOG/clathrin complex located at spindle inter-microtubules bridges. Interacts with NDC80; indicative for an association with the NDC80 complex. As to expression, overexpressed in hepatomas and colonic tumors. Also expressed in skeletal muscle, brain, heart, placenta, lung, liver, kidney and pancreas. Expression is elevated in the brain; highly expressed in the Purkinje cell bodies of the cerebellum.

Its subcellular location is the cytoplasm. It localises to the cytoskeleton. The protein resides in the microtubule organizing center. It is found in the centrosome. The protein localises to the spindle pole. Its subcellular location is the spindle. It localises to the chromosome. The protein resides in the centromere. It is found in the kinetochore. Its function is as follows. Binds to the plus end of microtubules and regulates microtubule dynamics and microtubule organization. Acts as a processive microtubule polymerase. Promotes cytoplasmic microtubule nucleation and elongation. Plays a major role in organizing spindle poles. In spindle formation protects kinetochore microtubules from depolymerization by KIF2C and has an essential role in centrosomal microtubule assembly independently of KIF2C activity. Contributes to centrosome integrity. Acts as a component of the TACC3/ch-TOG/clathrin complex proposed to contribute to stabilization of kinetochore fibers of the mitotic spindle by acting as inter-microtubule bridge. The TACC3/ch-TOG/clathrin complex is required for the maintenance of kinetochore fiber tension. Enhances the strength of NDC80 complex-mediated kinetochore-tip microtubule attachments. The protein is Cytoskeleton-associated protein 5 (CKAP5) of Homo sapiens (Human).